The following is a 143-amino-acid chain: Large ribosomal subunit protein uL15 (143 aa).

The interval 1 to 54 (MELNSIKPADGAKHAARRVGRGIGSGLGKTAGRGHKGQKSRSGGYHKVGFEGGQ) is disordered. The span at 21–31 (RGIGSGLGKTA) shows a compositional bias: gly residues.

It belongs to the universal ribosomal protein uL15 family. Part of the 50S ribosomal subunit.

Its function is as follows. Binds to the 23S rRNA. The chain is Large ribosomal subunit protein uL15 from Acidovorax ebreus (strain TPSY) (Diaphorobacter sp. (strain TPSY)).